A 261-amino-acid chain; its full sequence is tRNA pseudouridine synthase A (261 aa).

Catalysis depends on Asp-51, which acts as the Nucleophile. Tyr-109 is a substrate binding site.

Belongs to the tRNA pseudouridine synthase TruA family. In terms of assembly, homodimer.

The catalysed reaction is uridine(38/39/40) in tRNA = pseudouridine(38/39/40) in tRNA. In terms of biological role, formation of pseudouridine at positions 38, 39 and 40 in the anticodon stem and loop of transfer RNAs. In Shewanella baltica (strain OS185), this protein is tRNA pseudouridine synthase A.